Reading from the N-terminus, the 154-residue chain is MIRHIEGSLQAGEHRFALLVSRFNSFITQQLEQGAIDALRRHGAKEEQLHVVHVPGAYEMPLIAQKLARSGNYDAVLCLGAVIRGGTPHFDYVAAEVSKGVAQVSMDTGVPVIFGVLTTDSIEQAIERAGTKAGNKGFDAAMTALEMVQLLRQI.

5-amino-6-(D-ribitylamino)uracil is bound by residues phenylalanine 23, 57-59 (AYE), and 81-83 (AVI). 86–87 (GT) is a binding site for (2S)-2-hydroxy-3-oxobutyl phosphate. Residue histidine 89 is the Proton donor of the active site. Phenylalanine 114 serves as a coordination point for 5-amino-6-(D-ribitylamino)uracil. Arginine 128 is a (2S)-2-hydroxy-3-oxobutyl phosphate binding site.

This sequence belongs to the DMRL synthase family. As to quaternary structure, forms an icosahedral capsid composed of 60 subunits, arranged as a dodecamer of pentamers.

The catalysed reaction is (2S)-2-hydroxy-3-oxobutyl phosphate + 5-amino-6-(D-ribitylamino)uracil = 6,7-dimethyl-8-(1-D-ribityl)lumazine + phosphate + 2 H2O + H(+). It functions in the pathway cofactor biosynthesis; riboflavin biosynthesis; riboflavin from 2-hydroxy-3-oxobutyl phosphate and 5-amino-6-(D-ribitylamino)uracil: step 1/2. Catalyzes the formation of 6,7-dimethyl-8-ribityllumazine by condensation of 5-amino-6-(D-ribitylamino)uracil with 3,4-dihydroxy-2-butanone 4-phosphate. This is the penultimate step in the biosynthesis of riboflavin. The protein is 6,7-dimethyl-8-ribityllumazine synthase of Acidithiobacillus ferrooxidans (strain ATCC 23270 / DSM 14882 / CIP 104768 / NCIMB 8455) (Ferrobacillus ferrooxidans (strain ATCC 23270)).